The primary structure comprises 431 residues: Putative malic acid transport protein (431 aa).

10 helical membrane passes run 30–50 (FTWAWFASAMGTGGIGMVTSL), 62–82 (GKIIFIFQLSILTLYICCITF), 101–121 (VLFMPTALLAIATSISNLYPY), 136–156 (ILYWIFVAVACIFVISLFYSL), 167–187 (IIPALVLPIFPCMICGVIASA), 201–221 (VVAGIAFQGLGFWIYIIVYAV), 239–259 (GMFILVSPPSFTGLTLLDLAF), 284–304 (FMALFMIGLGIFNFCLAFVSV), 318–338 (VSWFAMIFANVGLVMDVQELG), and 346–366 (VCIVGQVCGVTITIVWIILIL). Residues 402-424 (EEEKDEAERSKRKAEESDGKTTR) are compositionally biased toward basic and acidic residues. The disordered stretch occupies residues 402 to 431 (EEEKDEAERSKRKAEESDGKTTRELTSGGL).

It belongs to the tellurite-resistance/dicarboxylate transporter (TDT) family.

Its subcellular location is the membrane. In Schizosaccharomyces pombe (strain 972 / ATCC 24843) (Fission yeast), this protein is Putative malic acid transport protein.